The sequence spans 185 residues: Elongation factor P (185 aa).

This sequence belongs to the elongation factor P family.

The protein localises to the cytoplasm. The protein operates within protein biosynthesis; polypeptide chain elongation. Its function is as follows. Involved in peptide bond synthesis. Stimulates efficient translation and peptide-bond synthesis on native or reconstituted 70S ribosomes in vitro. Probably functions indirectly by altering the affinity of the ribosome for aminoacyl-tRNA, thus increasing their reactivity as acceptors for peptidyl transferase. This Burkholderia ambifaria (strain MC40-6) protein is Elongation factor P.